The following is a 299-amino-acid chain: F-actin-capping protein subunit alpha-3 (299 aa).

Phosphoserine occurs at positions 2 and 290.

Belongs to the F-actin-capping protein alpha subunit family. As to quaternary structure, component of the F-actin capping complex, composed of a heterodimer of an alpha and a beta subunit. Component of the WASH complex, composed of F-actin-capping protein subunit alpha (CAPZA1, CAPZA2 or CAPZA3), F-actin-capping protein subunit beta (CAPZB), WASHC1, WASHC2, WASHC3, WASHC4 and WASHC5. In terms of tissue distribution, exclusively expressed in the testis.

It localises to the cytoplasm. It is found in the cytoskeleton. In terms of biological role, F-actin-capping proteins bind in a Ca(2+)-independent manner to the fast growing ends of actin filaments (barbed end) thereby blocking the exchange of subunits at these ends. Unlike other capping proteins (such as gelsolin and severin), these proteins do not sever actin filaments. May play a role in the morphogenesis of spermatid. The polypeptide is F-actin-capping protein subunit alpha-3 (Capza3) (Rattus norvegicus (Rat)).